A 546-amino-acid polypeptide reads, in one-letter code: Branchpoint-bridging protein (546 aa).

2 disordered regions span residues 1-141 (MWRP…ASAK) and 178-199 (TGDVVPPEGQRSPSPTPQYDAY). The span at 50 to 128 (RQERERDARD…DRGDSNEDGP (79 aa)) shows a compositional bias: basic and acidic residues. The KH domain maps to 251-330 (YIPVKEFPEI…SKVKTCVALI (80 aa)). CCHC-type zinc fingers lie at residues 368-385 (QLCQNCGEKGHRRWECPQ) and 393-410 (VICRICGGAGHMARDCRG).

It belongs to the BBP/SF1 family.

It is found in the nucleus. Its function is as follows. Necessary for the splicing of pre-mRNA. Has a role in the recognition of the branch site (5'-UACUAAC-3'), the pyrimidine tract and the 3'-splice site at the 3'-end of introns. This chain is Branchpoint-bridging protein (BBP), found in Cryptococcus neoformans var. neoformans serotype D (strain B-3501A) (Filobasidiella neoformans).